The sequence spans 913 residues: Ubiquitin carboxyl-terminal hydrolase 20 (913 aa).

The segment at 6 to 111 (DLCPHLDSIG…GSSKFSEQDS (106 aa)) adopts a UBP-type zinc-finger fold. Residues Cys8, His10, Cys30, Cys33, Cys43, Cys48, Cys53, His60, His64, His70, Cys83, and Cys86 each coordinate Zn(2+). Phosphoserine is present on residues Ser111, Ser131, and Ser133. In terms of domain architecture, USP spans 144-684 (TGMKNLGNSC…EGYVLFYRKS (541 aa)). The active-site Nucleophile is the Cys153. A disordered region spans residues 256–414 (LTEARDSDSS…SSSPPRASPV (159 aa)). Thr257 is modified (phosphothreonine). Positions 258 to 278 (EARDSDSSDTDEKREGDRSPS) are enriched in basic and acidic residues. Ser304 carries the phosphoserine modification. Residues 315-331 (EASRAISEKERMKDRKF) show a composition bias toward basic and acidic residues. Ser367 carries the phosphoserine modification. Thr376 carries the post-translational modification Phosphothreonine. Ser407 and Ser412 each carry phosphoserine. His642 serves as the catalytic Proton acceptor. 2 consecutive DUSP domains span residues 686-779 (EEAV…LYVC) and 788-891 (ALAK…RQSV).

The protein belongs to the peptidase C19 family. USP20/USP33 subfamily. In terms of assembly, interacts with VHL, leading to its ubiquitination and subsequent degradation. Interacts with CCP110. Interacts with DIO2. Interacts with HIF1A. Interacts with ADRB2. Interacts with USP18. Ubiquitinated via a VHL-dependent pathway for proteasomal degradation.

The protein localises to the cytoplasm. It is found in the endoplasmic reticulum. The protein resides in the perinuclear region. Its subcellular location is the cytoskeleton. It localises to the microtubule organizing center. The protein localises to the centrosome. It catalyses the reaction Thiol-dependent hydrolysis of ester, thioester, amide, peptide and isopeptide bonds formed by the C-terminal Gly of ubiquitin (a 76-residue protein attached to proteins as an intracellular targeting signal).. Functionally, deubiquitinating enzyme that plays a role in many cellular processes including autophagy, cellular antiviral response or membrane protein biogenesis. Attenuates TLR4-mediated NF-kappa-B signaling by cooperating with beta-arrestin-2/ARRB2 and inhibiting TRAF6 autoubiquitination. Promotes cellular antiviral responses by deconjugating 'Lys-33' and 'Lys-48'-linked ubiquitination of STING1 leading to its stabilization. Plays an essential role in autophagy induction by regulating the ULK1 stability through deubiquitination of ULK1. Acts as a positive regulator for NF-kappa-B activation by TNF-alpha through deubiquitinating 'Lys-48'-linked polyubiquitination of SQSTM1, leading to its increased stability. Acts as a regulator of G-protein coupled receptor (GPCR) signaling by mediating the deubiquitination beta-2 adrenergic receptor (ADRB2). Plays a central role in ADRB2 recycling and resensitization after prolonged agonist stimulation by constitutively binding ADRB2, mediating deubiquitination of ADRB2 and inhibiting lysosomal trafficking of ADRB2. Upon dissociation, it is probably transferred to the translocated beta-arrestins, possibly leading to beta-arrestins deubiquitination and disengagement from ADRB2. This suggests the existence of a dynamic exchange between the ADRB2 and beta-arrestins. Deubiquitinates DIO2, thereby regulating thyroid hormone regulation. Deubiquitinates HIF1A, leading to stabilize HIF1A and enhance HIF1A-mediated activity. Deubiquitinates MCL1, a pivotal member of the anti-apoptotic Bcl-2 protein family to regulate its stability. Within the endoplasmic reticulum, participates with USP33 in the rescue of post-translationally targeted membrane proteins that are inappropriately ubiquitinated by the cytosolic protein quality control in the cytosol. The chain is Ubiquitin carboxyl-terminal hydrolase 20 (USP20) from Pongo abelii (Sumatran orangutan).